A 246-amino-acid polypeptide reads, in one-letter code: Flagellar brake protein YcgR (246 aa).

Positions 128–232 (KRAHFRAYVG…QAERQLLQAI (105 aa)) constitute a PilZ domain.

The protein belongs to the YcgR family. Monomer. Interacts with the flagellar basal bodies.

Its subcellular location is the bacterial flagellum basal body. In terms of biological role, acts as a flagellar brake, regulating swimming and swarming in a bis-(3'-5') cyclic diguanylic acid (c-di-GMP)-dependent manner. Binds 1 c-di-GMP dimer per subunit. Increasing levels of c-di-GMP lead to decreased motility. This Thioalkalivibrio sulfidiphilus (strain HL-EbGR7) protein is Flagellar brake protein YcgR.